The primary structure comprises 68 residues: Protein ShdD (68 aa).

In terms of biological role, involved in the non-oxidative decarboxylation and detoxification of phenolic derivatives under anaerobic conditions, however the precise biochemical function of ShdD in metabolism of phenolic acid is unknown. This is Protein ShdD from Sedimentibacter hydroxybenzoicus (Clostridium hydroxybenzoicum).